The chain runs to 411 residues: Corticotropin-releasing factor receptor 2 (411 aa).

The segment at residues 1-19 is a signal peptide (not cleaved); it reads MDAALLLSLLEANCSLALA. Residues 1 to 108 lie on the Extracellular side of the membrane; it reads MDAALLLSLL…EPILDDKQRK (108 aa). N-linked (GlcNAc...) asparagine glycosylation is found at N13, N41, N74, N86, and N94. 3 disulfide bridges follow: C14–C50, C40–C83, and C64–C98. Residues 109–139 form a helical membrane-spanning segment; the sequence is YDLHYRIALIVNYLGHCVSVVALVAAFLLFL. Residues 140-146 lie on the Cytoplasmic side of the membrane; the sequence is VLRSIRC. The chain crosses the membrane as a helical span at residues 147–171; it reads LRNVIHWNLITTFILRNIAWFLLQL. Over 172 to 185 the chain is Extracellular; it reads IDHEVHEGNEVWCR. A disulfide bridge links C184 with C254. Residues 186–214 form a helical membrane-spanning segment; sequence CITTIFNYFVVTNFFWMFVEGCYLHTAIV. Over 215–221 the chain is Cytoplasmic; that stretch reads MTYSTEH. Residues 222–249 form a helical membrane-spanning segment; the sequence is LRKWLFLFIGWCIPCPIIIAWAVGKLYY. Topologically, residues 250 to 265 are extracellular; it reads ENEQCWFGKEAGDLVD. The chain crosses the membrane as a helical span at residues 266–291; sequence YIYQGPVMLVLLINFVFLFNIVRILM. Residues 292-302 are Cytoplasmic-facing; that stretch reads TKLRASTTSET. The helical transmembrane segment at 303 to 327 threads the bilayer; the sequence is IQYRKAVKATLVLLPLLGITYMLFF. The Extracellular portion of the chain corresponds to 328-334; sequence VNPGEDD. The chain crosses the membrane as a helical span at residues 335-364; the sequence is LSQIVFIYFNSFLQSFQGFFVSVFYCFFNG. Topologically, residues 365–411 are cytoplasmic; it reads EVRAALRKRWHRWQDHHALRVPVARAMSIPTSPTRISFHSIKQTAAV.

It belongs to the G-protein coupled receptor 2 family. As to quaternary structure, monomer. Interacts with CRF, UCN, UCN2 and UCN3. In terms of processing, a N-glycosylation site within the signal peptide impedes its proper cleavage and function. Highly expressed in the heart. Also expressed in lungs, skeletal muscle, gastrointestinal tract, epididymis, and brain.

It is found in the cell membrane. Functionally, G-protein coupled receptor for CRH (corticotropin-releasing factor), UCN (urocortin), UCN2 and UCN3. Has high affinity for UCN. Ligand binding causes a conformation change that triggers signaling via guanine nucleotide-binding proteins (G proteins) and down-stream effectors, such as adenylate cyclase. Promotes the activation of adenylate cyclase, leading to increased intracellular cAMP levels. This Mus musculus (Mouse) protein is Corticotropin-releasing factor receptor 2 (Crhr2).